Reading from the N-terminus, the 264-residue chain is S-adenosylmethionine decarboxylase proenzyme (264 aa).

The active-site Schiff-base intermediate with substrate; via pyruvic acid is the serine 112. Serine 112 bears the Pyruvic acid (Ser); by autocatalysis mark. Histidine 117 functions as the Proton acceptor; for processing activity in the catalytic mechanism. Cysteine 140 functions as the Proton donor; for catalytic activity in the catalytic mechanism.

Belongs to the prokaryotic AdoMetDC family. Type 2 subfamily. In terms of assembly, heterooctamer of four alpha and four beta chains arranged as a tetramer of alpha/beta heterodimers. Pyruvate serves as cofactor. Post-translationally, is synthesized initially as an inactive proenzyme. Formation of the active enzyme involves a self-maturation process in which the active site pyruvoyl group is generated from an internal serine residue via an autocatalytic post-translational modification. Two non-identical subunits are generated from the proenzyme in this reaction, and the pyruvate is formed at the N-terminus of the alpha chain, which is derived from the carboxyl end of the proenzyme. The post-translation cleavage follows an unusual pathway, termed non-hydrolytic serinolysis, in which the side chain hydroxyl group of the serine supplies its oxygen atom to form the C-terminus of the beta chain, while the remainder of the serine residue undergoes an oxidative deamination to produce ammonia and the pyruvoyl group blocking the N-terminus of the alpha chain.

The enzyme catalyses S-adenosyl-L-methionine + H(+) = S-adenosyl 3-(methylsulfanyl)propylamine + CO2. It functions in the pathway amine and polyamine biosynthesis; S-adenosylmethioninamine biosynthesis; S-adenosylmethioninamine from S-adenosyl-L-methionine: step 1/1. Functionally, catalyzes the decarboxylation of S-adenosylmethionine to S-adenosylmethioninamine (dcAdoMet), the propylamine donor required for the synthesis of the polyamines spermine and spermidine from the diamine putrescine. This chain is S-adenosylmethionine decarboxylase proenzyme, found in Salmonella typhi.